Here is a 108-residue protein sequence, read N- to C-terminus: Class I hydrophobin 3 (108 aa).

An N-terminal signal peptide occupies residues 1–17 (MFSRVFAVASLAALALA). 4 disulfide bridges follow: C26/C87, C33/C81, C34/C67, and C88/C101.

Belongs to the fungal hydrophobin family. In terms of assembly, self-assembles to form functional amyloid fibrils called rodlets. Self-assembly into fibrillar rodlets occurs spontaneously at hydrophobic:hydrophilic interfaces and the rodlets further associate laterally to form amphipathic monolayers.

It localises to the secreted. The protein resides in the cell wall. In terms of biological role, aerial growth, conidiation, and dispersal of filamentous fungi in the environment rely upon a capability of their secreting small amphipathic proteins called hydrophobins (HPBs) with low sequence identity. Class I can self-assemble into an outermost layer of rodlet bundles on aerial cell surfaces, conferring cellular hydrophobicity that supports fungal growth, development and dispersal; whereas Class II form highly ordered films at water-air interfaces through intermolecular interactions but contribute nothing to the rodlet structure. The chain is Class I hydrophobin 3 from Pisolithus tinctorius (Dead man's foot).